Here is a 127-residue protein sequence, read N- to C-terminus: Small ribosomal subunit protein bS6 (127 aa).

Positions 99–127 (PSPMMKEEKSKSMMPGDAAPAAPAETAAA) are disordered. Low complexity predominate over residues 110–127 (SMMPGDAAPAAPAETAAA).

It belongs to the bacterial ribosomal protein bS6 family.

Functionally, binds together with bS18 to 16S ribosomal RNA. This Dechloromonas aromatica (strain RCB) protein is Small ribosomal subunit protein bS6.